We begin with the raw amino-acid sequence, 103 residues long: Putative double-stranded DNA mimic protein APJL_1366 (103 aa).

It belongs to the putative dsDNA mimic protein family.

May act as a double-stranded DNA (dsDNA) mimic. Probably regulates the activity of a dsDNA-binding protein. This is Putative double-stranded DNA mimic protein APJL_1366 from Actinobacillus pleuropneumoniae serotype 3 (strain JL03).